We begin with the raw amino-acid sequence, 492 residues long: Glutamyl-tRNA(Gln) amidotransferase subunit A (492 aa).

Active-site charge relay system residues include Lys-78 and Ser-158. Residue Ser-182 is the Acyl-ester intermediate of the active site.

Belongs to the amidase family. GatA subfamily. As to quaternary structure, heterotrimer of A, B and C subunits.

It carries out the reaction L-glutamyl-tRNA(Gln) + L-glutamine + ATP + H2O = L-glutaminyl-tRNA(Gln) + L-glutamate + ADP + phosphate + H(+). In terms of biological role, allows the formation of correctly charged Gln-tRNA(Gln) through the transamidation of misacylated Glu-tRNA(Gln) in organisms which lack glutaminyl-tRNA synthetase. The reaction takes place in the presence of glutamine and ATP through an activated gamma-phospho-Glu-tRNA(Gln). The protein is Glutamyl-tRNA(Gln) amidotransferase subunit A of Orientia tsutsugamushi (strain Ikeda) (Rickettsia tsutsugamushi).